We begin with the raw amino-acid sequence, 767 residues long: General transcription and DNA repair factor IIH helicase/translocase subunit XPB1 (767 aa).

The interval 1-51 (MGNGERGRPNKKMKYGGKDDQKMKNIQNAEDYYDDADEDSRDGEGEEKKRD) is disordered. A compositionally biased stretch (acidic residues) spans 31–41 (DYYDDADEDSR). A compositionally biased stretch (basic and acidic residues) spans 42–51 (DGEGEEKKRD). A Helicase ATP-binding domain is found at 293 to 455 (MFGNGRARSG…DLNFLIGPKL (163 aa)). 306–313 (LPCGAGKS) is an ATP binding site. Residues 408 to 411 (DEVH) carry the DEVH box motif. The 167-residue stretch at 510–676 (RACEFLIRFH…SLPPPDAGSS (167 aa)) folds into the Helicase C-terminal domain. Residues 742–767 (RHKSGQQFKKPKDPTKRHNLFKKRYV) are disordered. Residues 750–766 (KKPKDPTKRHNLFKKRY) carry the Nuclear localization signal motif. A compositionally biased stretch (basic residues) spans 758 to 767 (RHNLFKKRYV).

This sequence belongs to the helicase family. RAD25/XPB subfamily. As to quaternary structure, component of the 7-subunit TFIIH core complex composed of XPB, XPD, TFB1/GTF2H1, GTF2H2/P44, TFB4/GTF2H3, TFB2/GTF2H4 and TFB5/GTF2H5, which is active in NER. The core complex associates with the 3-subunit CDK-activating kinase (CAK) module composed of CYCH1/cyclin H1, CDKD and MAT1/At4g30820 to form the 10-subunit holoenzyme (holo-TFIIH) active in transcription. In terms of tissue distribution, expressed ubiquitously.

It localises to the nucleus. The enzyme catalyses Couples ATP hydrolysis with the unwinding of duplex DNA by translocating in the 3'-5' direction.. It catalyses the reaction ATP + H2O = ADP + phosphate + H(+). In terms of biological role, ATP-dependent 3'-5' DNA helicase/translocase; binds dsDNA rather than ssDNA, unzipping it in a translocase rather than classical helicase activity. Component of the general transcription and DNA repair factor IIH (TFIIH) core complex. When complexed to CDK-activating kinase (CAK), involved in RNA transcription by RNA polymerase II. The ATPase activity of XPB/ERCC3, but not its helicase activity, is required for DNA opening; it may wrap around the damaged DNA wedging it open, causing localized melting and twisting that allows XPD/ERCC2 helicase to anchor. The ATP-dependent helicase activity of XPB/ERCC3 may be required for promoter escape. Also involved in transcription-coupled nucleotide excision repair (NER) of damaged DNA. In NER, TFIIH acts by opening DNA around the lesion to allow the excision of the damaged oligonucleotide and its replacement by a new DNA fragment. The structure of the TFIIH transcription complex differs from the NER-TFIIH complex. Partially complements UV sensitivity of a yeast SSL2 mutation. Required during the early stages of development, including seed germination. The protein is General transcription and DNA repair factor IIH helicase/translocase subunit XPB1 (XPB1) of Arabidopsis thaliana (Mouse-ear cress).